Consider the following 249-residue polypeptide: Type III pantothenate kinase (249 aa).

6-13 (DCGNSFIK) is a binding site for ATP. Substrate is bound by residues Tyr93 and 100 to 103 (GMDR). The active-site Proton acceptor is the Asp102. Asp122 contacts K(+). Thr125 serves as a coordination point for ATP. Thr181 provides a ligand contact to substrate.

It belongs to the type III pantothenate kinase family. In terms of assembly, homodimer. It depends on NH4(+) as a cofactor. K(+) is required as a cofactor.

Its subcellular location is the cytoplasm. The enzyme catalyses (R)-pantothenate + ATP = (R)-4'-phosphopantothenate + ADP + H(+). Its pathway is cofactor biosynthesis; coenzyme A biosynthesis; CoA from (R)-pantothenate: step 1/5. Functionally, catalyzes the phosphorylation of pantothenate (Pan), the first step in CoA biosynthesis. In Pseudomonas putida (strain ATCC 47054 / DSM 6125 / CFBP 8728 / NCIMB 11950 / KT2440), this protein is Type III pantothenate kinase.